The primary structure comprises 308 residues: Glycine--tRNA ligase alpha subunit (308 aa).

This sequence belongs to the class-II aminoacyl-tRNA synthetase family. Tetramer of two alpha and two beta subunits.

It is found in the cytoplasm. It catalyses the reaction tRNA(Gly) + glycine + ATP = glycyl-tRNA(Gly) + AMP + diphosphate. This chain is Glycine--tRNA ligase alpha subunit, found in Brucella canis (strain ATCC 23365 / NCTC 10854 / RM-666).